Here is a 140-residue protein sequence, read N- to C-terminus: Pro-vaccinia growth factor (140 aa).

The first 18 residues, 1 to 18 (MLINYLMLLFAAMIIRSF), serve as a signal peptide directing secretion. The Extracellular segment spans residues 19 to 100 (ADSGNAIETT…SEKPNTTTSY (82 aa)). An N-linked (GlcNAc...) asparagine; by host glycan is attached at Asn34. One can recognise an EGF-like domain in the interval 41–81 (AIRLCGPEGDGYCLHGDCIHARDIDGMYCRCSHGYTGIRCQ). 3 cysteine pairs are disulfide-bonded: Cys45–Cys58, Cys53–Cys69, and Cys71–Cys80. Asn95 carries N-linked (GlcNAc...) asparagine; by host glycosylation. The helical transmembrane segment at 101–121 (IPSPGIMLVLVGIIIITCCLL) threads the bilayer. The Cytoplasmic segment spans residues 122 to 140 (SVYRFTRRTKLPIQDMVVP).

This sequence belongs to the orthopoxvirus OPG019 family. As to quaternary structure, interacts with host EGFR.

The protein localises to the host membrane. Its subcellular location is the secreted. Functionally, stimulates cellular proliferation (hyperplasia)and mobility around infected cells to promote rapid and efficient spread of infection. This effect is beneficial for virus replication in vivo, because poxviruses replicate possibly better in proliferating cells than in quiescent cells. Acts by binding host EGFR, inducing its dimerization, autophosphorylation and leading to activation of several cellular pathways regulating cell proliferation or cell survival. The activation by host EGFR of mitogen activated protein kinases (MAPK) and extracellular-signal regulated kinases (ERK) are essential for the positive effect of vaccinia growth factor on poxvirus virulence in vivo. This chain is Pro-vaccinia growth factor (OPG019), found in Homo sapiens (Human).